The sequence spans 427 residues: Histidinol dehydrogenase (427 aa).

NAD(+) is bound by residues Tyr-123, Gln-185, and Asn-208. Ser-231, Gln-253, and His-256 together coordinate substrate. Residues Gln-253 and His-256 each contribute to the Zn(2+) site. Residues Glu-321 and His-322 each act as proton acceptor in the active site. 4 residues coordinate substrate: His-322, Asp-355, Glu-409, and His-414. Asp-355 is a Zn(2+) binding site. Residue His-414 participates in Zn(2+) binding.

The protein belongs to the histidinol dehydrogenase family. The cofactor is Zn(2+).

It catalyses the reaction L-histidinol + 2 NAD(+) + H2O = L-histidine + 2 NADH + 3 H(+). Its pathway is amino-acid biosynthesis; L-histidine biosynthesis; L-histidine from 5-phospho-alpha-D-ribose 1-diphosphate: step 9/9. In terms of biological role, catalyzes the sequential NAD-dependent oxidations of L-histidinol to L-histidinaldehyde and then to L-histidine. The sequence is that of Histidinol dehydrogenase from Oceanobacillus iheyensis (strain DSM 14371 / CIP 107618 / JCM 11309 / KCTC 3954 / HTE831).